A 282-amino-acid chain; its full sequence is E3 ubiquitin-protein ligase SIAH1 (282 aa).

Polar residues predominate over residues 1 to 17 (MSRQTATALPTGTSKCP). Residues 1 to 22 (MSRQTATALPTGTSKCPPSQRV) form a disordered region. At Ser-19 the chain carries Phosphoserine; by ATM and ATR. Residues 41–76 (CPVCFDYVLPPILQCQSGHLVCSNCRPKLTCCPTCR) form an RING-type zinc finger. An SBD region spans residues 90 to 282 (VANSVLFPCK…LGINVTISMC (193 aa)). An SIAH-type zinc finger spans residues 93–153 (SVLFPCKYAS…VMPHLMHQHK (61 aa)). Cys-98, Cys-105, His-117, Cys-121, Cys-128, Cys-135, His-147, and His-152 together coordinate Zn(2+).

Belongs to the SINA (Seven in absentia) family. Homodimer. Component of some large E3 complex composed of UBE2D1, SIAH1, CACYBP/SIP, SKP1, APC and TBL1X. Interacts with UBE2I. Interacts with alpha-tubulin. Interacts with PEG10, which may inhibit its activity. Interacts with PEG3 and HIPK2. Interacts with group 1 glutamate receptors GRM1 and GRM5. Interacts with DAB1, which may inhibit its activity. Interacts with UBE2E2. Interacts with SNCAIP. Interacts with HIPK2; the interaction is promoted by DAZAP2 and results in SIAH1-mediated ubiquitination and subsequent proteasomal degradation of HIPK2. Interacts with DAZAP2; the interaction is decreased following phosphorylation of DAZAP2 by HIPK2. Interacts with GAPDH; leading to stabilize SIAH1. Interacts with Bassoon/BSN and Piccolo/PLCO; these interactions negatively regulate SIAH1 E3 ligase activity. Interacts with DCC. Interacts with AXIN1; catalyzes AXIN1 ubiquitination and subsequent proteasome-mediated ubiquitin-dependent degradation. Post-translationally, phosphorylated on Ser-19 by ATM and ATR. This phosphorylation disrupts SIAH1 interaction with HIPK2, and subsequent proteasomal degradation of HIPK2.

It localises to the cytoplasm. It is found in the nucleus. It carries out the reaction S-ubiquitinyl-[E2 ubiquitin-conjugating enzyme]-L-cysteine + [acceptor protein]-L-lysine = [E2 ubiquitin-conjugating enzyme]-L-cysteine + N(6)-ubiquitinyl-[acceptor protein]-L-lysine.. It participates in protein modification; protein ubiquitination. Functionally, E3 ubiquitin-protein ligase that mediates ubiquitination and subsequent proteasomal degradation of target proteins. E3 ubiquitin ligases accept ubiquitin from an E2 ubiquitin-conjugating enzyme in the form of a thioester and then directly transfers the ubiquitin to targeted substrates. Mediates E3 ubiquitin ligase activity either through direct binding to substrates or by functioning as the essential RING domain subunit of larger E3 complexes. Triggers the ubiquitin-mediated degradation of many substrates, including proteins involved in transcription regulation (ELL2, MYB, POU2AF1, PML and RBBP8), a cell surface receptor (DCC), cytoplasmic signal transduction molecules (KLF10/TIEG1 and NUMB), an antiapoptotic protein (BAG1), a microtubule motor protein (KIF22), a protein involved in synaptic vesicle function in neurons (SYP), a structural protein (CTNNB1) and SNCAIP. Confers constitutive instability to HIPK2 through proteasomal degradation. It is thereby involved in many cellular processes such as apoptosis, tumor suppression, cell cycle, axon guidance, transcription, spermatogenesis and TNF-alpha signaling. Has some overlapping function with SIAH2. Induces apoptosis in cooperation with PEG3. Upon nitric oxid (NO) generation that follows apoptotic stimulation, interacts with S-nitrosylated GAPDH, mediating the translocation of GAPDH to the nucleus. GAPDH acts as a stabilizer of SIAH1, facilitating the degradation of nuclear proteins. Mediates ubiquitination and degradation of EGLN2 and EGLN3 in response to the unfolded protein response (UPR), leading to their degradation and subsequent stabilization of ATF4. Also part of the Wnt signaling pathway in which it mediates the Wnt-induced ubiquitin-mediated proteasomal degradation of AXIN1. The protein is E3 ubiquitin-protein ligase SIAH1 (Siah1) of Rattus norvegicus (Rat).